Reading from the N-terminus, the 336-residue chain is Mitochondrial thiamine pyrophosphate carrier 1 (336 aa).

3 Solcar repeats span residues 11–98 (ISST…VNQV), 112–202 (SSGA…VKDS), and 221–323 (TKGW…SLSI). The next 6 membrane-spanning stretches (helical) occupy residues 17-37 (MLCGGIAGMVSRFCIAPLDVV), 66-86 (GVTALWKGNIPAELLYVFYGA), 118-138 (FIAGATAGAGATIATYPFDLF), 177-197 (GVSSSIISIAPYMGLFFASYG), 228-244 (TAGLCAGTASKALVFPL), and 298-315 (GFLVSLIKSAPTSAITMY).

It belongs to the mitochondrial carrier (TC 2.A.29) family.

The protein localises to the mitochondrion inner membrane. Its function is as follows. Mitochondrial transporter that mediates uptake of thiamine pyrophosphate (ThPP) into mitochondria. The chain is Mitochondrial thiamine pyrophosphate carrier 1 (TPC1) from Yarrowia lipolytica (strain CLIB 122 / E 150) (Yeast).